The following is a 438-amino-acid chain: Serine hydroxymethyltransferase (438 aa).

Residues Leu-133 and 137–139 (GHL) each bind (6S)-5,6,7,8-tetrahydrofolate. Lys-242 is subject to N6-(pyridoxal phosphate)lysine.

It belongs to the SHMT family. As to quaternary structure, homodimer. The cofactor is pyridoxal 5'-phosphate.

Its subcellular location is the cytoplasm. It catalyses the reaction (6R)-5,10-methylene-5,6,7,8-tetrahydrofolate + glycine + H2O = (6S)-5,6,7,8-tetrahydrofolate + L-serine. It participates in one-carbon metabolism; tetrahydrofolate interconversion. It functions in the pathway amino-acid biosynthesis; glycine biosynthesis; glycine from L-serine: step 1/1. Functionally, catalyzes the reversible interconversion of serine and glycine with tetrahydrofolate (THF) serving as the one-carbon carrier. This reaction serves as the major source of one-carbon groups required for the biosynthesis of purines, thymidylate, methionine, and other important biomolecules. Also exhibits THF-independent aldolase activity toward beta-hydroxyamino acids, producing glycine and aldehydes, via a retro-aldol mechanism. This is Serine hydroxymethyltransferase from Brucella melitensis biotype 2 (strain ATCC 23457).